Here is a 2225-residue protein sequence, read N- to C-terminus: Multifunctional protein pyr1-3 (2225 aa).

Met1 carries the N-acetylmethionine modification. Residues 40–390 (MVGYNESISD…NVCGEQQHKS (351 aa)) are GATase (Glutamine amidotransferase). L-glutamine contacts are provided by Ser51, Gly245, and Gly247. One can recognise a Glutamine amidotransferase type-1 domain in the interval 196 to 388 (KVIVLDCGIK…VDNVCGEQQH (193 aa)). Cys275 serves as the catalytic Nucleophile; for GATase activity. The L-glutamine site is built by Gln279, Asn317, Gly319, and Phe320. Residues His361 and Glu363 each act as for GATase activity in the active site. Residues 391–405 (PMNKSKIIDCPKGIN) are linker. Residues 406–948 (KVLILGSGGL…TNDVNINEKS (543 aa)) are CPSase A. The tract at residues 406–1461 (KVLILGSGGL…MKGPMPIENV (1056 aa)) is CPSase (Carbamoyl-phosphate synthase). Residues Arg526, Arg566, Gly572, Gly573, Lys603, Glu610, Gly636, Ile637, His638, Gln679, and Glu693 each coordinate ATP. ATP-grasp domains follow at residues 530–722 (AEKL…KVAL) and 1069–1260 (SRLL…KIII). The Mg(2+) site is built by Gln679, Glu693, and Asn695. Positions 679, 693, and 695 each coordinate Mn(2+). The interval 949–1461 (YITLGSGSYR…MKGPMPIENV (513 aa)) is CPSase B. 10 residues coordinate ATP: Arg1105, Lys1144, Ile1146, Glu1151, Gly1176, Val1177, His1178, Ser1179, Gln1219, and Glu1231. Residues Gln1219, Glu1231, and Asn1233 each contribute to the Mg(2+) site. Residues Gln1219, Glu1231, and Asn1233 each contribute to the Mn(2+) site. The 147-residue stretch at 1324 to 1470 (FKAPEKNVLL…VDWRTSNKII (147 aa)) folds into the MGS-like domain. Positions 1463 to 1797 (WRTSNKIIRL…VRGKVVKVVL (335 aa)) are DHOase (dihydroorotase). Zn(2+)-binding residues include His1479 and His1481. (S)-dihydroorotate is bound by residues Arg1483 and Asn1513. Zn(2+)-binding residues include Lys1564, His1599, Cys1622, His1623, and Glu1646. Lys1564 is subject to N6-carboxylysine. Residue Arg1670 coordinates (S)-dihydroorotate. Residue Asp1695 participates in Zn(2+) binding. Asp1695 serves as the catalytic For DHOase activity. (S)-dihydroorotate-binding residues include His1699 and Pro1711. Residues 1798 to 1916 (RGQIAFIDGK…DTLQTAFNIS (119 aa)) form a linker region. An ATCase (Aspartate transcarbamylase) region spans residues 1917–2225 (DNSLAGKHIF…LLALVFGAGV (309 aa)). Carbamoyl phosphate-binding residues include Arg1974 and Thr1975. Lys2002 serves as a coordination point for L-aspartate. Carbamoyl phosphate-binding residues include Arg2023, His2051, and Gln2054. 2 residues coordinate L-aspartate: Arg2084 and Arg2145. Residues Leu2184 and Pro2185 each contribute to the carbamoyl phosphate site.

It in the N-terminal section; belongs to the CarA family. In the 2nd section; belongs to the CarB family. This sequence in the 3rd section; belongs to the metallo-dependent hydrolases superfamily. DHOase family. CAD subfamily. The protein in the C-terminal section; belongs to the aspartate/ornithine carbamoyltransferase superfamily. ATCase family. In terms of assembly, homohexamer. Requires Mg(2+) as cofactor. It depends on Mn(2+) as a cofactor. Zn(2+) is required as a cofactor.

It is found in the cytoplasm. It carries out the reaction hydrogencarbonate + L-glutamine + 2 ATP + H2O = carbamoyl phosphate + L-glutamate + 2 ADP + phosphate + 2 H(+). It catalyses the reaction L-glutamine + H2O = L-glutamate + NH4(+). The catalysed reaction is hydrogencarbonate + NH4(+) + 2 ATP = carbamoyl phosphate + 2 ADP + phosphate + 2 H(+). The enzyme catalyses carbamoyl phosphate + L-aspartate = N-carbamoyl-L-aspartate + phosphate + H(+). It carries out the reaction (S)-dihydroorotate + H2O = N-carbamoyl-L-aspartate + H(+). It functions in the pathway pyrimidine metabolism; UMP biosynthesis via de novo pathway; (S)-dihydroorotate from bicarbonate: step 1/3. The protein operates within pyrimidine metabolism; UMP biosynthesis via de novo pathway; (S)-dihydroorotate from bicarbonate: step 2/3. Its pathway is pyrimidine metabolism; UMP biosynthesis via de novo pathway; (S)-dihydroorotate from bicarbonate: step 3/3. Its activity is regulated as follows. Allosterically regulated and controlled by phosphorylation. 5-phosphoribose 1-diphosphate is an activator while UMP is an inhibitor of the CPSase reaction. In terms of biological role, multifunctional protein that encodes the first 3 enzymatic activities of the de novo pyrimidine pathway: carbamoylphosphate synthetase (CPSase; EC 6.3.5.5), aspartate transcarbamylase (ATCase; EC 2.1.3.2) and dihydroorotase (DHOase; EC 3.5.2.3). The CPSase-function is accomplished in 2 steps, by a glutamine-dependent amidotransferase activity (GATase) that binds and cleaves glutamine to produce ammonia, followed by an ammonium-dependent carbamoyl phosphate synthetase, which reacts with the ammonia, hydrogencarbonate and ATP to form carbamoyl phosphate. The endogenously produced carbamoyl phosphate is sequestered and channeled to the ATCase active site. ATCase then catalyzes the formation of carbamoyl-L-aspartate from L-aspartate and carbamoyl phosphate. In the last step, DHOase catalyzes the cyclization of carbamoyl aspartate to dihydroorotate. In Dictyostelium discoideum (Social amoeba), this protein is Multifunctional protein pyr1-3 (pyr1-3).